The sequence spans 538 residues: Atos homolog protein B (538 aa).

Polar residues-rich tracts occupy residues 1–12 (MRHVQAETSPSS) and 129–141 (GGSSTSPWTSGAR). 3 disordered regions span residues 1–98 (MRHV…EPPT), 129–185 (GGSS…QLHT), and 201–303 (LVSG…PTDC). Pro residues predominate over residues 227–238 (HTPPGPGPPGPC). Phosphoserine occurs at positions 254 and 255. The interval 348-430 (LLGNFEESLL…VPKVGTIQVT (83 aa)) is required for macropage invasion. The segment at 436-444 (QTVVKMFLV) is transactivation domain 1 (TAD1).

Belongs to the ATOS family.

The protein localises to the nucleus. Its function is as follows. Transcription regulator that may syncronize transcriptional and translational programs. In Bos taurus (Bovine), this protein is Atos homolog protein B.